The sequence spans 255 residues: MTGIVELDLRMLKKKTAMSKRTVLNENYKGIVESMSIPAEIHERNGKKYASVGSILPIHCCPPEELERRAESTHHYCGVFTDELLAPLEELAYVRLDENTAEKVFINRAKRILIVSSDGHLAQWRCAPTFESANRYIAGTPIVDQRGGVISVVVAKKNNHYAVSSFEGEGGYFESTQNWKVVEPAAGGYAYGELTFPSRTALREHVAGLRGGAGAWGDAVPVLRGGTSPRLALVLDGRQLAHYYLHNVIVDVEYL.

Belongs to the poxin family. Highly divergent.

It catalyses the reaction 2',3'-cGAMP + H2O = Gp(2'-5')Ap(3') + H(+). In terms of biological role, nuclease that cleaves 2',3'-cGAMP. The protein is Poxin of Bombyx mori (Silk moth).